A 100-amino-acid chain; its full sequence is Integration host factor subunit alpha (100 aa).

This sequence belongs to the bacterial histone-like protein family. Heterodimer of an alpha and a beta chain.

This protein is one of the two subunits of integration host factor, a specific DNA-binding protein that functions in genetic recombination as well as in transcriptional and translational control. This chain is Integration host factor subunit alpha, found in Rhizorhabdus wittichii (strain DSM 6014 / CCUG 31198 / JCM 15750 / NBRC 105917 / EY 4224 / RW1) (Sphingomonas wittichii).